Here is a 493-residue protein sequence, read N- to C-terminus: uncharacterized protein (493 aa).

Residues 96 to 124 are disordered; it reads TTVAKASPPPAKPASAPTEITWKGSPQFT.

This is an uncharacterized protein from Caulobacter vibrioides (strain ATCC 19089 / CIP 103742 / CB 15) (Caulobacter crescentus).